Here is a 160-residue protein sequence, read N- to C-terminus: Crossover junction endodeoxyribonuclease RuvC (160 aa).

Residues Asp7, Glu70, and Asp142 contribute to the active site. Asp7, Glu70, and Asp142 together coordinate Mg(2+).

The protein belongs to the RuvC family. As to quaternary structure, homodimer which binds Holliday junction (HJ) DNA. The HJ becomes 2-fold symmetrical on binding to RuvC with unstacked arms; it has a different conformation from HJ DNA in complex with RuvA. In the full resolvosome a probable DNA-RuvA(4)-RuvB(12)-RuvC(2) complex forms which resolves the HJ. It depends on Mg(2+) as a cofactor.

It localises to the cytoplasm. It carries out the reaction Endonucleolytic cleavage at a junction such as a reciprocal single-stranded crossover between two homologous DNA duplexes (Holliday junction).. The RuvA-RuvB-RuvC complex processes Holliday junction (HJ) DNA during genetic recombination and DNA repair. Endonuclease that resolves HJ intermediates. Cleaves cruciform DNA by making single-stranded nicks across the HJ at symmetrical positions within the homologous arms, yielding a 5'-phosphate and a 3'-hydroxyl group; requires a central core of homology in the junction. The consensus cleavage sequence is 5'-(A/T)TT(C/G)-3'. Cleavage occurs on the 3'-side of the TT dinucleotide at the point of strand exchange. HJ branch migration catalyzed by RuvA-RuvB allows RuvC to scan DNA until it finds its consensus sequence, where it cleaves and resolves the cruciform DNA. This is Crossover junction endodeoxyribonuclease RuvC from Ehrlichia ruminantium (strain Welgevonden).